A 648-amino-acid polypeptide reads, in one-letter code: Threonine--tRNA ligase (648 aa).

Positions 1–61 (MINITFPDGA…DTDGSIEIVT (61 aa)) constitute a TGS domain. Positions 242–540 (DHRKLGKELD…LIETYKGAFP (299 aa)) are catalytic. Cys336, His387, and His517 together coordinate Zn(2+).

This sequence belongs to the class-II aminoacyl-tRNA synthetase family. In terms of assembly, homodimer. Zn(2+) is required as a cofactor.

The protein resides in the cytoplasm. The enzyme catalyses tRNA(Thr) + L-threonine + ATP = L-threonyl-tRNA(Thr) + AMP + diphosphate + H(+). Its function is as follows. Catalyzes the attachment of threonine to tRNA(Thr) in a two-step reaction: L-threonine is first activated by ATP to form Thr-AMP and then transferred to the acceptor end of tRNA(Thr). Also edits incorrectly charged L-seryl-tRNA(Thr). The polypeptide is Threonine--tRNA ligase (Streptococcus uberis (strain ATCC BAA-854 / 0140J)).